A 149-amino-acid chain; its full sequence is 2S seed storage albumin protein (149 aa).

The N-terminal stretch at 1-22 (MKLFIILATATLLIAATQATYP) is a signal peptide. Cystine bridges form between cysteine 38–cysteine 98, cysteine 52–cysteine 87, cysteine 88–cysteine 133, and cysteine 100–cysteine 140. Positions 121-128 (EGVRDLKE) are igE-binding.

It belongs to the 2S seed storage albumins family. As to expression, expressed in seeds (at protein level).

Functionally, seed storage protein. The chain is 2S seed storage albumin protein from Fagopyrum esculentum (Common buckwheat).